The following is a 458-amino-acid chain: 3-isopropylmalate dehydratase large subunit (458 aa).

3 residues coordinate [4Fe-4S] cluster: cysteine 339, cysteine 399, and cysteine 402.

This sequence belongs to the aconitase/IPM isomerase family. LeuC type 1 subfamily. In terms of assembly, heterodimer of LeuC and LeuD. It depends on [4Fe-4S] cluster as a cofactor.

It carries out the reaction (2R,3S)-3-isopropylmalate = (2S)-2-isopropylmalate. Its pathway is amino-acid biosynthesis; L-leucine biosynthesis; L-leucine from 3-methyl-2-oxobutanoate: step 2/4. Its function is as follows. Catalyzes the isomerization between 2-isopropylmalate and 3-isopropylmalate, via the formation of 2-isopropylmaleate. The protein is 3-isopropylmalate dehydratase large subunit of Lactococcus lactis subsp. cremoris (strain SK11).